Consider the following 330-residue polypeptide: Phenylalanine--tRNA ligase alpha subunit (330 aa).

Glu-257 contributes to the Mg(2+) binding site.

This sequence belongs to the class-II aminoacyl-tRNA synthetase family. Phe-tRNA synthetase alpha subunit type 1 subfamily. As to quaternary structure, tetramer of two alpha and two beta subunits. Mg(2+) is required as a cofactor.

It is found in the cytoplasm. It catalyses the reaction tRNA(Phe) + L-phenylalanine + ATP = L-phenylalanyl-tRNA(Phe) + AMP + diphosphate + H(+). This Acaryochloris marina (strain MBIC 11017) protein is Phenylalanine--tRNA ligase alpha subunit.